We begin with the raw amino-acid sequence, 393 residues long: tRNA(Met) cytidine acetate ligase (393 aa).

ATP is bound by residues Gly-81, Asn-142, and Arg-167.

This sequence belongs to the TmcAL family.

It is found in the cytoplasm. The catalysed reaction is cytidine(34) in elongator tRNA(Met) + acetate + ATP = N(4)-acetylcytidine(34) in elongator tRNA(Met) + AMP + diphosphate. Its function is as follows. Catalyzes the formation of N(4)-acetylcytidine (ac(4)C) at the wobble position of elongator tRNA(Met), using acetate and ATP as substrates. First activates an acetate ion to form acetyladenylate (Ac-AMP) and then transfers the acetyl group to tRNA to form ac(4)C34. In Bacillus cereus (strain ZK / E33L), this protein is tRNA(Met) cytidine acetate ligase.